The chain runs to 476 residues: Cysteine--tRNA ligase (476 aa).

A Zn(2+)-binding site is contributed by Cys31. A 'HIGH' region motif is present at residues 33-43 (PTVYNYAHIGN). The Zn(2+) site is built by Cys211, His236, and Glu240. Residues 269-273 (KMSKS) carry the 'KMSKS' region motif. Lys272 contacts ATP.

This sequence belongs to the class-I aminoacyl-tRNA synthetase family. In terms of assembly, monomer. It depends on Zn(2+) as a cofactor.

The protein localises to the cytoplasm. The enzyme catalyses tRNA(Cys) + L-cysteine + ATP = L-cysteinyl-tRNA(Cys) + AMP + diphosphate. This is Cysteine--tRNA ligase from Xanthomonas axonopodis pv. citri (strain 306).